Consider the following 376-residue polypeptide: Queuine tRNA-ribosyltransferase (376 aa).

The active-site Proton acceptor is Asp-93. Residues 93–97, Asp-147, Gln-190, and Gly-217 contribute to the substrate site; that span reads DSGGF. The interval 248-254 is RNA binding; the sequence is GVGKPDD. The active-site Nucleophile is the Asp-267. Positions 305, 307, 310, and 336 each coordinate Zn(2+).

This sequence belongs to the queuine tRNA-ribosyltransferase family. As to quaternary structure, homodimer. Within each dimer, one monomer is responsible for RNA recognition and catalysis, while the other monomer binds to the replacement base PreQ1. It depends on Zn(2+) as a cofactor.

It carries out the reaction 7-aminomethyl-7-carbaguanine + guanosine(34) in tRNA = 7-aminomethyl-7-carbaguanosine(34) in tRNA + guanine. The protein operates within tRNA modification; tRNA-queuosine biosynthesis. Catalyzes the base-exchange of a guanine (G) residue with the queuine precursor 7-aminomethyl-7-deazaguanine (PreQ1) at position 34 (anticodon wobble position) in tRNAs with GU(N) anticodons (tRNA-Asp, -Asn, -His and -Tyr). Catalysis occurs through a double-displacement mechanism. The nucleophile active site attacks the C1' of nucleotide 34 to detach the guanine base from the RNA, forming a covalent enzyme-RNA intermediate. The proton acceptor active site deprotonates the incoming PreQ1, allowing a nucleophilic attack on the C1' of the ribose to form the product. After dissociation, two additional enzymatic reactions on the tRNA convert PreQ1 to queuine (Q), resulting in the hypermodified nucleoside queuosine (7-(((4,5-cis-dihydroxy-2-cyclopenten-1-yl)amino)methyl)-7-deazaguanosine). The chain is Queuine tRNA-ribosyltransferase from Cereibacter sphaeroides (strain ATCC 17029 / ATH 2.4.9) (Rhodobacter sphaeroides).